The chain runs to 3788 residues: Lysosomal-trafficking regulator (3788 aa).

2 disordered regions span residues 148–180 (KSTH…TVVS) and 198–217 (EGHL…VLSD). S164 carries the phosphoserine modification. T165 carries the post-translational modification Phosphothreonine. Residue S166 is modified to Phosphoserine. A WD 1 repeat occupies 662–700 (GPTSGLPSPSYRFQGILPSSGSEDLLWKWDALEAYQSFV). Disordered regions lie at residues 1169–1196 (LGPG…FSEE), 1213–1240 (GYEA…EAEG), and 1482–1519 (ESAA…TESI). The span at 1213-1232 (GYEADSESNPEDVDTQDDGV) shows a compositional bias: acidic residues. 2 positions are modified to phosphoserine: S1503 and S1504. Residues 1576-1620 (SQENIFFPSKWQHLVLTYIQHPQGKKNVHGEISIWVSGQRKTDVI) form a WD 2 repeat. A phosphoserine mark is found at S2099, S2118, S2203, S2207, and S2254. A disordered region spans residues 2177-2221 (ANGVSRGSPRFPRARVDHKDVGTEPRSDDDSPGDESYPRRPDNLK). Over residues 2190–2205 (ARVDHKDVGTEPRSDD) the composition is skewed to basic and acidic residues. Disordered stretches follow at residues 2556-2581 (HDSE…SIAG) and 2659-2681 (NTSQ…HHEQ). Positions 2566-2578 (SAHRHSVPPKRRS) are enriched in basic residues. Residues 2659–2671 (NTSQSKTSVSQTE) are compositionally biased toward polar residues. Residues 2996 to 3102 (AASESIRVNR…VRDDVYQSIL (107 aa)) form the BEACH-type PH domain. Residues 3126 to 3409 (QITNFEYLTH…QLFHTAHASR (284 aa)) enclose the BEACH domain. WD repeat units follow at residues 3550-3589 (SQQH…STPS), 3601-3640 (GHTE…YVQS), 3643-3686 (GHKS…VGHV), 3687-3731 (HCRE…PVRE), and 3736-3775 (KSNK…RVKL).

Interacts with CPAP, LIP8 and ZNF521. As to expression, expressed in the heart, lung, liver, spleen, brain and in different immune cell types (purified B and T lymphocytes, bone marrow-derived macrophages and dendritic cells).

The protein localises to the cytoplasm. In terms of biological role, adapter protein that regulates and/or fission of intracellular vesicles such as lysosomes. Might regulate trafficking of effectors involved in exocytosis. In cytotoxic T-cells and natural killer (NK) cells, has role in the regulation of size, number and exocytosis of lytic granules. In macrophages and dendritic cells, regulates phagosome maturation by controlling the conversion of early phagosomal compartments into late phagosomes. In macrophages and dendritic cells, specifically involved in TLR3- and TLR4-induced production of pro-inflammatory cytokines by regulating the endosomal TLR3- TICAM1/TRIF and TLR4- TICAM1/TRIF signaling pathways. In Mus musculus (Mouse), this protein is Lysosomal-trafficking regulator (Lyst).